We begin with the raw amino-acid sequence, 104 residues long: MSLFKGFMINLFLTPIPDSPMNLLTIGTGIIGVIGGILVVKGFTFFDKCYNKNSTNNSNSDECLPIFIGGLLGGIIGIATGFSITIIIAITLAIKSIINCVESQ.

A run of 2 helical transmembrane segments spans residues 26–46 and 70–90; these read IGTGIIGVIGGILVVKGFTFF and GLLGGIIGIATGFSITIIIAI.

It is found in the membrane. This is an uncharacterized protein from Acanthamoeba polyphaga mimivirus (APMV).